Reading from the N-terminus, the 120-residue chain is Large ribosomal subunit protein uL22 (120 aa).

The interval 1–20 is disordered; the sequence is MFVNRRYTARGKNLPSSPKK.

Belongs to the universal ribosomal protein uL22 family. In terms of assembly, part of the 50S ribosomal subunit.

Its function is as follows. This protein binds specifically to 23S rRNA; its binding is stimulated by other ribosomal proteins, e.g. L4, L17, and L20. It is important during the early stages of 50S assembly. It makes multiple contacts with different domains of the 23S rRNA in the assembled 50S subunit and ribosome. Functionally, the globular domain of the protein is located near the polypeptide exit tunnel on the outside of the subunit, while an extended beta-hairpin is found that lines the wall of the exit tunnel in the center of the 70S ribosome. This Borrelia turicatae (strain 91E135) protein is Large ribosomal subunit protein uL22.